We begin with the raw amino-acid sequence, 419 residues long: 26S proteasome regulatory subunit 8 homolog B (419 aa).

Position 202-209 (202-209) interacts with ATP; sequence GPPGTGKT. A Glycyl lysine isopeptide (Lys-Gly) (interchain with G-Cter in ubiquitin) cross-link involves residue Lys-406.

It belongs to the AAA ATPase family. In terms of assembly, component of the 19S regulatory particle (RP/PA700) base subcomplex of the 26S proteasome. The 26S proteasome is composed of a core protease (CP), known as the 20S proteasome, capped at one or both ends by the 19S regulatory particle (RP/PA700). The RP/PA700 complex is composed of at least 17 different subunits in two subcomplexes, the base and the lid, which form the portions proximal and distal to the 20S proteolytic core, respectively.

The protein localises to the cytoplasm. It is found in the nucleus. Functionally, the 26S proteasome is involved in the ATP-dependent degradation of ubiquitinated proteins. The regulatory (or ATPase) complex confers ATP dependency and substrate specificity to the 26S complex. This chain is 26S proteasome regulatory subunit 8 homolog B (RPT6B), found in Arabidopsis thaliana (Mouse-ear cress).